Reading from the N-terminus, the 542-residue chain is Mitochondrial distribution and morphology protein 34 (542 aa).

One can recognise an SMP-LTD domain in the interval Met-1–Gln-216. Disordered regions lie at residues Leu-27 to Pro-58 and Ser-372 to Val-435. Positions Thr-31–Thr-48 are enriched in low complexity. Positions Asp-49 to Pro-58 are enriched in basic and acidic residues. Residues Ile-379–Lys-394 are compositionally biased toward basic residues. Residues Ser-403–Ser-414 are compositionally biased toward low complexity.

The protein belongs to the MDM34 family. Component of the ER-mitochondria encounter structure (ERMES) or MDM complex, composed of MMM1, MDM10, MDM12 and MDM34.

It is found in the mitochondrion outer membrane. In terms of biological role, component of the ERMES/MDM complex, which serves as a molecular tether to connect the endoplasmic reticulum (ER) and mitochondria. Components of this complex are involved in the control of mitochondrial shape and protein biogenesis, and function in nonvesicular lipid trafficking between the ER and mitochondria. MDM34 is required for the interaction of the ER-resident membrane protein MMM1 and the outer mitochondrial membrane-resident beta-barrel protein MDM10. This chain is Mitochondrial distribution and morphology protein 34, found in Lachancea thermotolerans (strain ATCC 56472 / CBS 6340 / NRRL Y-8284) (Yeast).